The sequence spans 776 residues: Protein SEY1 (776 aa).

The Cytoplasmic portion of the chain corresponds to methionine 1–histidine 681. Residues glycine 34–tyrosine 263 form the GB1/RHD3-type G domain. Position 44–51 (glycine 44–serine 51) interacts with GTP. A helical transmembrane segment spans residues isoleucine 682–isoleucine 702. Over arginine 703–proline 705 the chain is Lumenal. Residues leucine 706–leucine 726 traverse the membrane as a helical segment. Topologically, residues tryptophan 727–lysine 776 are cytoplasmic.

It belongs to the TRAFAC class dynamin-like GTPase superfamily. GB1/RHD3 GTPase family. RHD3 subfamily. In terms of assembly, interacts with RTN1 and YOP1; GTP binding is not required for these interactions.

It localises to the endoplasmic reticulum membrane. Its function is as follows. Cooperates with the reticulon proteins RTN1 and RTN2 and the tubule-shaping DP1 family protein YOP1 to generate and maintain the structure of the tubular endoplasmic reticulum network. Has GTPase activity, which is required for its function in ER organization. In Saccharomyces cerevisiae (strain YJM789) (Baker's yeast), this protein is Protein SEY1.